Reading from the N-terminus, the 203-residue chain is Peptidyl-tRNA hydrolase (203 aa).

TRNA is bound at residue Y16. H21 serves as the catalytic Proton acceptor. The tRNA site is built by Y68, N70, and N116.

Belongs to the PTH family. As to quaternary structure, monomer.

It is found in the cytoplasm. It catalyses the reaction an N-acyl-L-alpha-aminoacyl-tRNA + H2O = an N-acyl-L-amino acid + a tRNA + H(+). Hydrolyzes ribosome-free peptidyl-tRNAs (with 1 or more amino acids incorporated), which drop off the ribosome during protein synthesis, or as a result of ribosome stalling. In terms of biological role, catalyzes the release of premature peptidyl moieties from peptidyl-tRNA molecules trapped in stalled 50S ribosomal subunits, and thus maintains levels of free tRNAs and 50S ribosomes. In Nostoc sp. (strain PCC 7120 / SAG 25.82 / UTEX 2576), this protein is Peptidyl-tRNA hydrolase.